Consider the following 354-residue polypeptide: Ubiquinol oxidase 1a, mitochondrial (354 aa).

A mitochondrion-targeting transit peptide spans 1-62; that stretch reads MMITRGGAKA…RAPTIGGMRF (62 aa). The segment at 68–99 is disordered; it reads LGEKTPMKEEDANQKKTENESTGGDAAGGNNK. The span at 72-86 shows a compositional bias: basic and acidic residues; the sequence is TPMKEEDANQKKTEN. The helical transmembrane segment at 179–199 threads the bilayer; the sequence is AMMLETVAAVPGMVGGMLLHC. Fe cation is bound by residues Glu183, Glu222, and His225. A helical transmembrane segment spans residues 241 to 261; it reads ALVITVQGVFFNAYFLGYLIS. 3 residues coordinate Fe cation: Glu273, Glu324, and His327.

It belongs to the alternative oxidase family. As to quaternary structure, homodimer; disulfide-linked. Fe cation is required as a cofactor. As to expression, expressed in roots, stems, cotyledons, leaves and flowers. High expression in sepals.

It is found in the mitochondrion inner membrane. It carries out the reaction 2 a ubiquinol + O2 = 2 a ubiquinone + 2 H2O. With respect to regulation, when the two monomeric subunits are covalently linked by a S-S bond, the enzyme is essentially inactive. When the disulfide bond is reduced, its component sulfhydryls can associate with K-keto acids through formation of a thiohemiacetal, resulting in enzyme activation. Activated by glyoxylate, irrespective to the substitution found at Cys-127. That suggests the presence of a second activation site, possibly Cys-177. Its function is as follows. Catalyzes the cyanide-resistant oxidation of ubiquinol and the reduction of molecular oxygen to water, but does not translocate protons and consequently is not linked to oxidative phosphorylation. Increases respiration when the cytochrome respiratory pathway is restricted, or in response to low temperatures. In Arabidopsis thaliana (Mouse-ear cress), this protein is Ubiquinol oxidase 1a, mitochondrial (AOX1A).